Consider the following 514-residue polypeptide: Steroid 17-alpha-hydroxylase/17,20 lyase (514 aa).

Cys445 is a binding site for heme.

It belongs to the cytochrome P450 family. Requires heme as cofactor.

The protein resides in the membrane. The catalysed reaction is a C21-steroid + reduced [NADPH--hemoprotein reductase] + O2 = a 17alpha-hydroxy-C21-steroid + oxidized [NADPH--hemoprotein reductase] + H2O + H(+). It catalyses the reaction 17alpha-hydroxyprogesterone + reduced [NADPH--hemoprotein reductase] + O2 = androst-4-ene-3,17-dione + acetate + oxidized [NADPH--hemoprotein reductase] + H2O + 2 H(+). It carries out the reaction 17alpha-hydroxypregnenolone + reduced [NADPH--hemoprotein reductase] + O2 = 3beta-hydroxyandrost-5-en-17-one + acetate + oxidized [NADPH--hemoprotein reductase] + H2O + 2 H(+). It participates in lipid metabolism; steroid biosynthesis. Functionally, conversion of pregnenolone and progesterone to their 17-alpha-hydroxylated products and subsequently to dehydroepiandrosterone (DHEA) and androstenedione. Catalyzes both the 17-alpha-hydroxylation and the 17,20-lyase reaction. In Ictalurus punctatus (Channel catfish), this protein is Steroid 17-alpha-hydroxylase/17,20 lyase (cyp17a1).